Reading from the N-terminus, the 103-residue chain is Histone H4 (103 aa).

Gly residues predominate over residues 1 to 14 (MSGRGKGGKGLGKG). Positions 1–20 (MSGRGKGGKGLGKGGAKRHR) are disordered. K6 carries the post-translational modification N6-acetyl-N6-methyllysine; alternate. N6-methyllysine; alternate occurs at positions 6, 9, and 13. K13 carries the post-translational modification N6-acetyl-N6-methyllysine; alternate. The DNA-binding element occupies 17–21 (KRHRK). K92 is modified (N6-glutaryllysine).

This sequence belongs to the histone H4 family. The nucleosome is a histone octamer containing two molecules each of H2A, H2B, H3 and H4 assembled in one H3-H4 heterotetramer and two H2A-H2B heterodimers. The octamer wraps approximately 147 bp of DNA. In terms of processing, glutarylation at Lys-92 (H4K91glu) destabilizes nucleosomes by promoting dissociation of the H2A-H2B dimers from nucleosomes.

The protein localises to the nucleus. Its subcellular location is the chromosome. Its function is as follows. Core component of nucleosome. Nucleosomes wrap and compact DNA into chromatin, limiting DNA accessibility to the cellular machineries which require DNA as a template. Histones thereby play a central role in transcription regulation, DNA repair, DNA replication and chromosomal stability. DNA accessibility is regulated via a complex set of post-translational modifications of histones, also called histone code, and nucleosome remodeling. The polypeptide is Histone H4 (HHF1) (Mycosarcoma maydis (Corn smut fungus)).